The following is a 159-amino-acid chain: Glucosamine 6-phosphate N-acetyltransferase (159 aa).

Ser2 carries the post-translational modification N-acetylserine. D-glucosamine 6-phosphate-binding positions include Thr28, 86–89 (KIIH), and 98–100 (EDI). One can recognise an N-acetyltransferase domain in the interval 28–159 (TTVGTITPES…NAGVEMQIRK (132 aa)). Acetyl-CoA-binding positions include 100 to 102 (IAV) and 108 to 113 (GQGLGK). D-glucosamine 6-phosphate-binding positions include 129–130 (YK) and Asp134. Acetyl-CoA is bound at residue 143–145 (YEK). Arg158 is a binding site for D-glucosamine 6-phosphate.

The protein belongs to the acetyltransferase family. GNA1 subfamily. Homodimer.

It catalyses the reaction D-glucosamine 6-phosphate + acetyl-CoA = N-acetyl-D-glucosamine 6-phosphate + CoA + H(+). The protein operates within nucleotide-sugar biosynthesis; UDP-N-acetyl-alpha-D-glucosamine biosynthesis; N-acetyl-alpha-D-glucosamine 1-phosphate from alpha-D-glucosamine 6-phosphate (route I): step 1/2. This Saccharomyces cerevisiae (strain ATCC 204508 / S288c) (Baker's yeast) protein is Glucosamine 6-phosphate N-acetyltransferase (GNA1).